The chain runs to 195 residues: CASP-like protein 2C2 (195 aa).

The Cytoplasmic segment spans residues 1-18 (MAATTAAAAVPGVVRAER). A helical membrane pass occupies residues 19-39 (LLRGGCVVMAATAALLLGFSA). The Extracellular segment spans residues 40–57 (ETKTVLFVRKTAVAKDVQ). The chain crosses the membrane as a helical span at residues 58–78 (ALWVLTVAAAAAAGYQFAQLV). The Cytoplasmic portion of the chain corresponds to 79-106 (RCMYCSSSGDAGAMAVAWTSFLLDKGCA). Residues 107–127 (YVVFASTAAALQACMVGLIGV) form a helical membrane-spanning segment. Topologically, residues 128 to 145 (EALQWSKLCNIYTRFCEQ) are extracellular. Residues 146-166 (AAAGMLCSFLAAAGMAVLSAF) form a helical membrane-spanning segment. Over 167–195 (SARRLFRLYSPAGHRRSCPRAAVLATSPH) the chain is Cytoplasmic.

Belongs to the Casparian strip membrane proteins (CASP) family. Homodimer and heterodimers.

The protein localises to the cell membrane. The polypeptide is CASP-like protein 2C2 (Oryza sativa subsp. japonica (Rice)).